We begin with the raw amino-acid sequence, 1370 residues long: DNA-directed RNA polymerase subunit beta (1370 aa).

It belongs to the RNA polymerase beta chain family. The RNAP catalytic core consists of 2 alpha, 1 beta, 1 beta' and 1 omega subunit. When a sigma factor is associated with the core the holoenzyme is formed, which can initiate transcription.

The catalysed reaction is RNA(n) + a ribonucleoside 5'-triphosphate = RNA(n+1) + diphosphate. Functionally, DNA-dependent RNA polymerase catalyzes the transcription of DNA into RNA using the four ribonucleoside triphosphates as substrates. This is DNA-directed RNA polymerase subunit beta from Bordetella pertussis (strain Tohama I / ATCC BAA-589 / NCTC 13251).